Here is an 800-residue protein sequence, read N- to C-terminus: Transducin beta-like protein 3 (800 aa).

N-acetylalanine is present on Ala-2. WD repeat units follow at residues 64–105 (EDQE…RLWK), 107–146 (IHTA…GTHH), 149–190 (GSPG…CLAV), 193–232 (AHYS…TSRT), 245–284 (LPEE…CVYT), 290–329 (GLRQ…LQKQ), 332–372 (GYSE…CQIL), 374–413 (GHTD…QVAC), 419–459 (GHTH…PSKN), 477–516 (CHDK…LLGV), 519–560 (GHRR…KTFE), 562–602 (HDAS…RTLD), and 604–642 (HEDK…EQAE). A Glycyl lysine isopeptide (Lys-Gly) (interchain with G-Cter in SUMO2) cross-link involves residue Lys-407.

In terms of assembly, part of the small subunit (SSU) processome, composed of more than 70 proteins and the RNA chaperone small nucleolar RNA (snoRNA) U3.

It is found in the nucleus. Its subcellular location is the nucleolus. Functionally, part of the small subunit (SSU) processome, first precursor of the small eukaryotic ribosomal subunit. During the assembly of the SSU processome in the nucleolus, many ribosome biogenesis factors, an RNA chaperone and ribosomal proteins associate with the nascent pre-rRNA and work in concert to generate RNA folding, modifications, rearrangements and cleavage as well as targeted degradation of pre-ribosomal RNA by the RNA exosome. In Rattus norvegicus (Rat), this protein is Transducin beta-like protein 3 (Tbl3).